The sequence spans 443 residues: 3-phosphoshikimate 1-carboxyvinyltransferase (443 aa).

3-phosphoshikimate-binding residues include K24, S25, and R29. A phosphoenolpyruvate-binding site is contributed by K24. Residues G96 and R124 each coordinate phosphoenolpyruvate. Positions 168, 170, 316, and 343 each coordinate 3-phosphoshikimate. Q170 is a phosphoenolpyruvate binding site. The Proton acceptor role is filled by D316. Residues R347 and R391 each coordinate phosphoenolpyruvate.

The protein belongs to the EPSP synthase family. Monomer.

It is found in the cytoplasm. It carries out the reaction 3-phosphoshikimate + phosphoenolpyruvate = 5-O-(1-carboxyvinyl)-3-phosphoshikimate + phosphate. Its pathway is metabolic intermediate biosynthesis; chorismate biosynthesis; chorismate from D-erythrose 4-phosphate and phosphoenolpyruvate: step 6/7. Functionally, catalyzes the transfer of the enolpyruvyl moiety of phosphoenolpyruvate (PEP) to the 5-hydroxyl of shikimate-3-phosphate (S3P) to produce enolpyruvyl shikimate-3-phosphate and inorganic phosphate. In Dichelobacter nodosus (Bacteroides nodosus), this protein is 3-phosphoshikimate 1-carboxyvinyltransferase.